Here is a 547-residue protein sequence, read N- to C-terminus: Fimbria adhesin EcpD (547 aa).

Positions 1-23 (MRVNLLITMIIFALIWPVTALRA) are cleaved as a signal peptide.

The protein belongs to the EcpD/MatE family. In terms of assembly, forms polymers. Interacts with EcpA.

It is found in the fimbrium. Functionally, part of the ecpRABCDE operon, which encodes the E.coli common pilus (ECP). ECP is found in both commensal and pathogenic strains and plays a dual role in early-stage biofilm development and host cell recognition. Tip pilus adhesin, which is required for assembly of EcpA into fibers. The protein is Fimbria adhesin EcpD (ecpD) of Escherichia coli (strain K12).